Reading from the N-terminus, the 324-residue chain is Lactonase drp35 (324 aa).

The Ca(2+) site is built by Glu-47, Ser-109, Gly-111, Asp-129, Thr-132, Tyr-134, Asp-137, Asn-184, Asp-235, and Ser-236. Asp-235 (proton donor) is an active-site residue.

It belongs to the SMP-30/CGR1 family. It depends on Ca(2+) as a cofactor.

The protein resides in the cytoplasm. In terms of biological role, exhibits lactonase activity. Acts in cells with perturbed membrane integrity and is possibly related to the membrane homeostasis. This chain is Lactonase drp35 (drp35), found in Staphylococcus saprophyticus subsp. saprophyticus (strain ATCC 15305 / DSM 20229 / NCIMB 8711 / NCTC 7292 / S-41).